The sequence spans 80 residues: Conotoxin Cl9.5 (80 aa).

The first 23 residues, methionine 1–alanine 23, serve as a signal peptide directing secretion. Positions glycine 24–aspartate 37 are excised as a propeptide. 3 disulfide bridges follow: cysteine 42–cysteine 59, cysteine 47–cysteine 69, and cysteine 49–cysteine 74.

As to expression, expressed by the venom duct.

It is found in the secreted. This Californiconus californicus (California cone) protein is Conotoxin Cl9.5.